Here is a 1457-residue protein sequence, read N- to C-terminus: Ras guanine nucleotide exchange factor C (1457 aa).

One copy of the RCC1 1 repeat lies at 1-55 (MSVFTFGHGSNGALGLGKITDDTCPTPQKVNYFTEIDKRVKKVACGSYHTVFVTD). 4 disordered regions span residues 75-196 (FYTS…PLLN), 209-264 (HYES…RINK), 282-313 (EQQQ…DEDP), and 376-404 (QQQL…SLQT). Low complexity-rich tracts occupy residues 83-121 (TTTT…KIVN) and 134-158 (SNTT…LPPT). 2 stretches are compositionally biased toward basic and acidic residues: residues 171 to 188 (IKLD…ELIQ) and 209 to 224 (HYES…KDNE). Residues 225-237 (NENEEDEDDDDDD) are compositionally biased toward acidic residues. A compositionally biased stretch (basic and acidic residues) spans 238–249 (STIRQNEDKESS). 2 stretches are compositionally biased toward low complexity: residues 283-292 (QQQQPQQPQQ) and 376-403 (QQQL…SSLQ). 4 RCC1 repeats span residues 351–401 (GGNV…SSSS), 432–483 (WGEL…CYTE), 485–549 (GKMY…VLTQ), and 590–647 (SGEV…ALVE). A DH domain is found at 650 to 971 (PKTKLALQLV…QVLLERMNQN (322 aa)). Over residues 703-715 (LPPSLKGLSGGLP) the composition is skewed to low complexity. The disordered stretch occupies residues 703–762 (LPPSLKGLSGGLPDNANNTIKNGKDKDNHHNGDSNGHHSNGHYHGNGNNGNNSITTSNSI). A compositionally biased stretch (basic and acidic residues) spans 724-738 (NGKDKDNHHNGDSNG). The segment covering 739–762 (HHSNGHYHGNGNNGNNSITTSNSI) has biased composition (low complexity). Positions 989 to 1109 (GNPQIMGGSL…SVSQIKLQYF (121 aa)) constitute an N-terminal Ras-GEF domain. Residues 1127–1210 (LTQNEITTPP…NNNNNNNNLT (84 aa)) are disordered. The stretch at 1138-1211 (LQIQNNNQNN…NNNNNNNLTN (74 aa)) forms a coiled coil. Residues 1142-1210 (NNNQNNNLEN…NNNNNNNNLT (69 aa)) are compositionally biased toward low complexity. Positions 1232 to 1454 (QPIEVAQTLT…DDKQAQKISS (223 aa)) constitute a Ras-GEF domain.

In terms of biological role, promotes the exchange of Ras-bound GDP by GTP. This is Ras guanine nucleotide exchange factor C (gefC) from Dictyostelium discoideum (Social amoeba).